The sequence spans 158 residues: Phosphopantetheine adenylyltransferase (158 aa).

Substrate is bound at residue T8. ATP-binding positions include 8–9 and H16; that span reads TF. Residues K40, L72, and R86 each coordinate substrate. ATP is bound by residues 87–89, E97, and 122–128; these read GLR and HAFISSS.

This sequence belongs to the bacterial CoaD family. Homohexamer. Mg(2+) is required as a cofactor.

It localises to the cytoplasm. The enzyme catalyses (R)-4'-phosphopantetheine + ATP + H(+) = 3'-dephospho-CoA + diphosphate. It functions in the pathway cofactor biosynthesis; coenzyme A biosynthesis; CoA from (R)-pantothenate: step 4/5. In terms of biological role, reversibly transfers an adenylyl group from ATP to 4'-phosphopantetheine, yielding dephospho-CoA (dPCoA) and pyrophosphate. The chain is Phosphopantetheine adenylyltransferase from Campylobacter jejuni subsp. jejuni serotype O:6 (strain 81116 / NCTC 11828).